The sequence spans 528 residues: MAGSDTAPFLSQADDPDDGPAPGHPGLPGPMGNPKSGELEVPDCEGLQRITGLSRGHSTLIVVVLCYINLLNYMDRFTVAGVLTDIEQFFNIGDGSTGLIQTVFISSYMVLAPVFGYLGDRYNRKYLMCGGIAFWSLVTLGSSFIPREHFWLLLLTRGLVGVGEASYSTIAPTLIADLFVADQRSRMLSIFYFAIPVGSGLGYIAGSKVKDLAGDWHWALRVTPGLGVLAVLLLFLVVQEPPRGAVERHSGSPPLSPTSWWADLKALARNPSFVLSSLGFTAVAFVTGSLALWAPAFLLRSRVVLGETPPCLPGDSCSSSDSLIFGLITCLTGVLGVGLGVEISRRLRRFNPRADPLVCAAGLLGSSPFLFLSLACARGSIVATYIFIFIGETLLSMNWAIVADILLYVVIPTRRSTAEAFQIVLSHLLGDAGSPYLIGLISDRLRRSWPPSFLSEFRALQFSLMLCAFVGALGGAAFLGTAMFIENDRRRAQLHVQGLLHETEPSDDQIVVPQRGRSTRVPVSSVLI.

The tract at residues 1–38 is disordered; sequence MAGSDTAPFLSQADDPDDGPAPGHPGLPGPMGNPKSGE. Position 2 is an N-acetylalanine (alanine 2). The next 12 membrane-spanning stretches (helical) occupy residues 60 to 80, 98 to 118, 126 to 146, 160 to 180, 187 to 207, 218 to 238, 278 to 298, 323 to 343, 357 to 377, 381 to 401, 421 to 441, and 465 to 485; these read LIVV…FTVA, GLIQ…FGYL, YLMC…SFIP, VGVG…DLFV, MLSI…IAGS, WALR…FLVV, LGFT…PAFL, LIFG…GVEI, LVCA…LACA, IVAT…NWAI, FQIV…IGLI, and MLCA…AMFI. Position 518 is a phosphoserine (serine 518).

This sequence belongs to the major facilitator superfamily. Spinster (TC 2.A.1.49) family. As to quaternary structure, interacts with BCL2 and BCL2L1.

It is found in the lysosome membrane. It carries out the reaction a 1-acyl-sn-glycero-3-phosphocholine(out) + H(+)(out) = a 1-acyl-sn-glycero-3-phosphocholine(in) + H(+)(in). The catalysed reaction is 1-hexadecanoyl-sn-glycero-3-phosphocholine(out) + H(+)(out) = 1-hexadecanoyl-sn-glycero-3-phosphocholine(in) + H(+)(in). The enzyme catalyses 1-(9Z-octadecenoyl)-sn-glycero-3-phosphocholine(out) + H(+)(out) = 1-(9Z-octadecenoyl)-sn-glycero-3-phosphocholine(in) + H(+)(in). It catalyses the reaction 1-(5Z,8Z,11Z,14Z-eicosatetraenoyl)-sn-glycero-3-phosphocholine(out) + H(+)(out) = 1-(5Z,8Z,11Z,14Z-eicosatetraenoyl)-sn-glycero-3-phosphocholine(in) + H(+)(in). It carries out the reaction 1-(4Z,7Z,10Z,13Z,16Z,19Z-docosahexaenoyl)-sn-glycero-3-phosphocholine(out) + H(+)(out) = 1-(4Z,7Z,10Z,13Z,16Z,19Z-docosahexaenoyl)-sn-glycero-3-phosphocholine(in) + H(+)(in). The catalysed reaction is a 1-acyl-sn-glycero-3-phosphoethanolamine(out) + H(+)(out) = a 1-acyl-sn-glycero-3-phosphoethanolamine(in) + H(+)(in). The enzyme catalyses 1-(9Z-octadecenoyl)-sn-glycero-3-phosphoethanolamine(out) + H(+)(out) = 1-(9Z-octadecenoyl)-sn-glycero-3-phosphoethanolamine(in) + H(+)(in). It catalyses the reaction 1-acyl-sn-glycero-3-phospho-(1'-sn-glycerol)(out) + H(+)(out) = 1-acyl-sn-glycero-3-phospho-(1'-sn-glycerol)(in) + H(+)(in). It carries out the reaction 1-(9Z-octadecenoyl)-sn-glycero-3-phospho-(1'-sn-glycerol)(out) + H(+)(out) = 1-(9Z-octadecenoyl)-sn-glycero-3-phospho-(1'-sn-glycerol)(in) + H(+)(in). The catalysed reaction is a 1-O-(1Z-alkenyl)-sn-glycero-3-phosphocholine(out) + H(+)(out) = a 1-O-(1Z-alkenyl)-sn-glycero-3-phosphocholine(in) + H(+)(in). The enzyme catalyses 1-(1Z-hexadecenyl)-sn-glycero-3-phosphocholine(out) + H(+)(out) = 1-(1Z-hexadecenyl)-sn-glycero-3-phosphocholine(in) + H(+)(in). It catalyses the reaction a 1-O-(1Z-alkenyl)-sn-glycero-3-phosphoethanolamine(out) + H(+)(out) = a 1-O-(1Z-alkenyl)-sn-glycero-3-phosphoethanolamine(in) + H(+)(in). It carries out the reaction 1-O-(1Z-hexadecenyl)-sn-glycero-3-phosphoethanolamine(out) + H(+)(out) = 1-O-(1Z-hexadecenyl)-sn-glycero-3-phosphoethanolamine(in) + H(+)(in). Functionally, plays a critical role in the phospholipid salvage pathway from lysosomes to the cytosol. Mediates the rate-limiting, proton-dependent, lysosomal efflux of lysophospholipids, which can then be reacylated by acyltransferases in the endoplasmic reticulum to form phospholipids. Selective for zwitterionic headgroups such as lysophosphatidylcholine (LPC) and lysophosphatidylethanolamine (LPE), can also transport lysophosphatidylglycerol (LPG), but not other anionic lysophospholipids, sphingosine, nor sphingomyelin. Transports lysophospholipids with saturated, monounsaturated, and polyunsaturated fatty acids, such as 1-hexadecanoyl-sn-glycero-3-phosphocholine, 1-(9Z-octadecenoyl)-sn-glycero-3-phosphocholine and 1-(4Z,7Z,10Z,13Z,16Z,19Z-docosahexaenoyl)-sn-glycero-3-phosphocholine, respectively. Can also transport lysoplasmalogen (LPC with a fatty alcohol) such as 1-(1Z-hexadecenyl)-sn-glycero-3-phosphocholine. Essential player in lysosomal homeostasis. Crucial for cell survival under conditions of nutrient limitation. May be involved in necrotic or autophagic cell death. The sequence is that of Protein spinster homolog 1 (Spns1) from Rattus norvegicus (Rat).